The sequence spans 337 residues: Tryptophan--tRNA ligase (337 aa).

Residues 12–14 (QPS) and 21–22 (GN) each bind ATP. Residues 13–22 (PSADSLHLGN) carry the 'HIGH' region motif. D138 lines the L-tryptophan pocket. ATP contacts are provided by residues 150 to 152 (GDD), I189, and 198 to 202 (KMSKS). The 'KMSKS' region motif lies at 198–202 (KMSKS).

It belongs to the class-I aminoacyl-tRNA synthetase family. In terms of assembly, homodimer.

It localises to the cytoplasm. It catalyses the reaction tRNA(Trp) + L-tryptophan + ATP = L-tryptophyl-tRNA(Trp) + AMP + diphosphate + H(+). In terms of biological role, catalyzes the attachment of tryptophan to tRNA(Trp). The chain is Tryptophan--tRNA ligase from Leifsonia xyli subsp. xyli (strain CTCB07).